We begin with the raw amino-acid sequence, 540 residues long: uncharacterized protein (540 aa).

At 1–61 (MFSIFKKKTS…TNDSPWQDPT (61 aa)) the chain is on the cytoplasmic side. The helical transmembrane segment at 62 to 82 (YFSSFGKELMFIATCMLAQLL) threads the bilayer. Over 83-108 (NQAGQTHALCIMNVLSKSFNSEANNQ) the chain is Extracellular. Residues 109–129 (AWLMASFPLAAGSFILISGRL) traverse the membrane as a helical segment. At 130–131 (GD) the chain is on the cytoplasmic side. Residues 132–152 (IYGLKKMLIVGYVIVIVWSII) form a helical membrane-spanning segment. Over 153–169 (SGLSKYSNSDAFFITSR) the chain is Extracellular. Residues 170-190 (AFQGVGIAFILPNIMGLVGHV) form a helical membrane-spanning segment. Residues 191–203 (YKVGSFRKNIVIS) are Cytoplasmic-facing. Residues 204–224 (FIGACAPTGGMFGGLFGGLIV) form a helical membrane-spanning segment. The Extracellular segment spans residues 225-232 (TEDPNQWP). Residues 233–253 (WVFYAFGIATFLSLLMAWYSI) traverse the membrane as a helical segment. The Cytoplasmic segment spans residues 254-272 (PNNVPTNIHGLSMDWTGSA). A helical transmembrane segment spans residues 273-293 (LAIIGLILFNFVWNQAPIVGW). The Extracellular segment spans residues 294-295 (DK). A helical transmembrane segment spans residues 296–316 (PYIIVLLIISVIFLVAFFVYE). Over 317-334 (SKYAEVPLLPRAMTKNRH) the chain is Cytoplasmic. The helical transmembrane segment at 335-355 (MIMILLAVFLGWGSFGIWTFY) threads the bilayer. At 356 to 372 (YVSFQLNLRHYSPVWTG) the chain is on the extracellular side. The chain crosses the membrane as a helical span at residues 373-393 (GTYFVFVIFGSMAAFFVAFSI). The Cytoplasmic portion of the chain corresponds to 394-398 (KRLGP). The helical transmembrane segment at 399 to 419 (ALLLCFSLMAFDAGSIMFSVL) threads the bilayer. At 420 to 429 (PVEQSYWKLN) the chain is on the extracellular side. Residues 430-450 (FAMQAILCFGMDLSFPASSII) form a helical membrane-spanning segment. Residues 451-461 (LSDGLPMQYQG) are Cytoplasmic-facing. Residues 462–482 (MAGSLVNTVINYSASLCLGMG) traverse the membrane as a helical segment. Residues 483–502 (GTVEHQINKSGNDLLKGYRA) are Extracellular-facing. A helical transmembrane segment spans residues 503-523 (AVYLGVGLASLGVVISVTYML). Over 524–540 (ENLWNRHRKSEDRSLEA) the chain is Cytoplasmic.

The protein belongs to the major facilitator superfamily.

It is found in the membrane. This is an uncharacterized protein from Saccharomyces cerevisiae (strain ATCC 204508 / S288c) (Baker's yeast).